The sequence spans 244 residues: Gas vesicle protein F (244 aa).

Belongs to the gas vesicle GvpF/GvpL family. Binds GvpA.

Its subcellular location is the gas vesicle. Its function is as follows. A minor component of the gas vesicle, may be involved in preventing GvpA aggregation during gas vesicle nucleation. Gas vesicles (GV) are hollow, gas filled proteinaceous nanostructures. During planktonic growth they allow positioning of the organism at a favorable depth for light or nutrient acquisition. Cluster expression in E.coli (gvpA1-gvpA2-gvpC-gvpN-gvpJ-gvpK-gvpF-gvpG-gvpV-gvpW) allows cells to float and produces irregularly shaped gas vesicles. This chain is Gas vesicle protein F, found in Nostoc sp. (strain PCC 7120 / SAG 25.82 / UTEX 2576).